An 89-amino-acid chain; its full sequence is Small ribosomal subunit protein bS16c (89 aa).

This sequence belongs to the bacterial ribosomal protein bS16 family.

The protein resides in the plastid. The protein localises to the chloroplast. This Morus indica (Mulberry) protein is Small ribosomal subunit protein bS16c.